The sequence spans 41 residues: Large ribosomal subunit protein bL36 (41 aa).

The protein belongs to the bacterial ribosomal protein bL36 family.

The protein is Large ribosomal subunit protein bL36 of Chelativorans sp. (strain BNC1).